The following is a 604-amino-acid chain: Prostaglandin G/H synthase 2 (604 aa).

The signal sequence occupies residues 1 to 17 (MLARALLLCAAVALSGA). The 38-residue stretch at 18–55 (ANPCCSHPCQNRGVCMSVGFDQYKCDCTRTGFYGENCT) folds into the EGF-like domain. Intrachain disulfides connect Cys21–Cys32, Cys22–Cys145, Cys26–Cys42, and Cys44–Cys54. Residue Asn53 is glycosylated (N-linked (GlcNAc...) asparagine). Residue Arg106 participates in substrate binding. N-linked (GlcNAc...) asparagine glycosylation occurs at Asn130. The Proton acceptor role is filled by His193. Tyr341 contacts substrate. The active-site For cyclooxygenase activity is Tyr371. Residue His374 participates in heme b binding. Residue Asn396 is glycosylated (N-linked (GlcNAc...) asparagine). Cys526 carries the S-nitrosocysteine modification. A disulfide bridge links Cys555 with Cys561. Ser565 is subject to O-acetylserine. A glycan (N-linked (GlcNAc...) asparagine) is linked at Asn580.

It belongs to the prostaglandin G/H synthase family. In terms of assembly, homodimer. The cofactor is heme b. Post-translationally, S-nitrosylation by NOS2 (iNOS) activates enzyme activity. S-nitrosylation may take place on different Cys residues in addition to Cys-526. In terms of processing, acetylated at Ser-565 by SPHK1. During neuroinflammation, acetylation by SPHK1 promotes neuronal secretion of specialized preresolving mediators (SPMs), especially 15-R-lipoxin A4, which results in an increase of phagocytic microglia.

It is found in the microsome membrane. Its subcellular location is the endoplasmic reticulum membrane. It localises to the nucleus inner membrane. The protein localises to the nucleus outer membrane. It catalyses the reaction (5Z,8Z,11Z,14Z)-eicosatetraenoate + AH2 + 2 O2 = prostaglandin H2 + A + H2O. The catalysed reaction is (5Z,8Z,11Z,14Z)-eicosatetraenoate + 2 O2 = prostaglandin G2. It carries out the reaction prostaglandin G2 + AH2 = prostaglandin H2 + A + H2O. The enzyme catalyses (5Z,8Z,11Z,14Z,17Z)-eicosapentaenoate + 2 O2 = prostaglandin G3. It catalyses the reaction prostaglandin G3 + AH2 = prostaglandin H3 + A + H2O. The catalysed reaction is (8Z,11Z,14Z)-eicosatrienoate + 2 O2 = prostaglandin G1. It carries out the reaction prostaglandin G1 + AH2 = prostaglandin H1 + A + H2O. The enzyme catalyses 2-(5Z,8Z,11Z,14Z)-eicosatetraenoyl-sn-glycero-3-phosphoethanolamine + 2 O2 = 2-(prostaglandin G2)-sn-glycero-3-phosphoethanolamine. It catalyses the reaction 2-(prostaglandin G2)-sn-glycero-3-phosphoethanolamine + AH2 = 2-(prostaglandin H2)-sn-glycero-3-phosphoethanolamine + A + H2O. The catalysed reaction is 2-(5Z,8Z,11Z,14Z)-eicosatetraenoyl-sn-glycero-3-phosphocholine + 2 O2 = 2-(prostaglandin G2)-sn-glycero-3-phosphocholine. It carries out the reaction 2-(prostaglandin G2)-sn-glycero-3-phosphocholine + AH2 = 2-(prostaglandin H2)-sn-glycero-3-phosphocholine + A + H2O. The enzyme catalyses (15S)-hydroperoxy-(5Z,8Z,11Z,13E)-eicosatetraenoate + AH2 = (15S)-hydroxy-(5Z,8Z,11Z,13E)-eicosatetraenoate + A + H2O. It catalyses the reaction 2-(5Z,8Z,11Z,14Z)-eicosatetraenoyl-sn-glycero-3-phosphocholine + AH2 + O2 = 2-[(15S)-hydroxy-(5Z,8Z,11Z,13E)-eicosatetraenoyl]-sn-glycero-3-phosphocholine + A + H2O. The catalysed reaction is 2-(5Z,8Z,11Z,14Z)-eicosatetraenoyl-sn-glycero-3-phosphocholine + AH2 + O2 = 2-[(15R)-hydroxy-(5Z,8Z,11Z,13E)-eicosatetraenoyl]-sn-glycero-3-phosphocholine + A + H2O. It carries out the reaction 2-(5Z,8Z,11Z,14Z)-eicosatetraenoyl-sn-glycero-3-phosphocholine + AH2 + O2 = 2-[(11R)-hydroxy-(5Z,8Z,12E,14Z)-eicosatetraenoyl]-sn-glycero-3-phosphocholine + A + H2O. The enzyme catalyses (9Z,12Z)-octadecadienoate + AH2 + O2 = 9-hydroxy-(10E,12Z)-octadecadienoate + A + H2O. It catalyses the reaction (9Z,12Z)-octadecadienoate + AH2 + O2 = 13-hydroxy-(9Z,11E)-octadecadienoate + A + H2O. The catalysed reaction is (5Z,8Z,11Z,14Z)-eicosatetraenoate + AH2 + O2 = (15R)-hydroxy-(5Z,8Z,11Z,13E)-eicosatetraenoate + A + H2O. It carries out the reaction (5Z,8Z,11Z,14Z)-eicosatetraenoate + AH2 + O2 = (11R)-hydroxy-(5Z,8Z,12E,14Z)-eicosatetraenoate + A + H2O. The enzyme catalyses (5Z,8Z,11Z,14Z,17Z)-eicosapentaenoate + AH2 + O2 = (11R)-hydroxy-(5Z,8Z,12E,14Z,17Z)-eicosapentaenoate + A + H2O. It catalyses the reaction (5Z,8Z,11Z,14Z,17Z)-eicosapentaenoate + AH2 + O2 = (18S)-hydroxy-(5Z,8Z,11Z,14Z,16E)-eicosapentaenoate + A + H2O. The catalysed reaction is (5Z,8Z,11Z,14Z,17Z)-eicosapentaenoate + AH2 + O2 = (18R)-hydroxy-(5Z,8Z,11Z,14Z,16E)-eicosapentaenoate + A + H2O. It carries out the reaction (5Z,8Z,11Z,14Z,17Z)-eicosapentaenoate + AH2 + O2 = (15R)-hydroxy-(5Z,8Z,11Z,13E,17Z)-eicosapentaenoate + A + H2O. The enzyme catalyses (5Z,8Z,11Z,14Z,17Z)-eicosapentaenoate + AH2 + O2 = (15S)-hydroxy-(5Z,8Z,11Z,13E,17Z)-eicosapentaenoate + A + H2O. It catalyses the reaction (7Z,10Z,13Z,16Z,19Z)-docosapentaenoate + AH2 + O2 = 13R-hydroxy-(7Z,10Z,14E,16Z,19Z)-docosapentaenoate + A + H2O. The catalysed reaction is (4Z,7Z,10Z,13Z,16Z,19Z)-docosahexaenoate + AH2 + O2 = 13-hydroxy-(4Z,7Z,10Z,14E,16Z,19Z)-docosahexaenoate + A + H2O. It carries out the reaction (5S)-hydroxy-(6E,8Z,11Z,14Z)-eicosatetraenoate + AH2 + O2 = (5S,15R)-dihydroxy-(6E,8Z,11Z,13E)-eicosatetraenoate + A + H2O. The enzyme catalyses (4Z,7Z,10Z,13Z,16Z,19Z)-docosahexaenoate + AH2 + O2 = 17R-hydroxy-(4Z,7Z,10Z,13Z,15E,19Z)-docosahexaenoate + A + H2O. It catalyses the reaction (5S)-hydroxy-(6E,8Z,11Z,14Z)-eicosatetraenoate + AH2 + O2 = (5S,15S)-dihydroxy-(6E,8Z,11Z,13E)-eicosatetraenoate + A + H2O. The catalysed reaction is (5S)-hydroxy-(6E,8Z,11Z,14Z)-eicosatetraenoate + AH2 + O2 = (5S,11R)-dihydroxy-(6E,8Z,12E,14Z)-eicosatetraenoate + A + H2O. It carries out the reaction 2-(5Z,8Z,11Z,14Z-eicosatetraenoyl)-glycerol + 2 O2 = 2-glyceryl-prostaglandin G2. The enzyme catalyses 2-glyceryl-prostaglandin G2 + AH2 = 2-glyceryl-prostaglandin H2 + A + H2O. It catalyses the reaction (5Z,8Z,11Z,14Z)-eicosatetraenoate + O2 = (15R)-hydroperoxy-(5Z,8Z,11Z,13E)-eicosatetraenoate. The catalysed reaction is (5Z,8Z,11Z,14Z)-eicosatetraenoate + O2 = 11R-hydroperoxy-(5Z,8Z,12E,14Z)-eicosatetraenoate. It carries out the reaction (9Z,12Z)-octadecadienoate + AH2 + O2 = (9R)-hydroxy-(10E,12Z)-octadecadienoate + A + H2O. The enzyme catalyses (9Z,12Z)-octadecadienoate + AH2 + O2 = (9S)-hydroxy-(10E,12Z)-octadecadienoate + A + H2O. It catalyses the reaction (9Z,12Z)-octadecadienoate + AH2 + O2 = (13S)-hydroxy-(9Z,11E)-octadecadienoate + A + H2O. The catalysed reaction is (9Z,12Z)-octadecadienoate + AH2 + O2 = (13R)-hydroxy-(9Z,11E)-octadecadienoate + A + H2O. It participates in lipid metabolism; prostaglandin biosynthesis. In terms of biological role, dual cyclooxygenase and peroxidase in the biosynthesis pathway of prostanoids, a class of C20 oxylipins mainly derived from arachidonate ((5Z,8Z,11Z,14Z)-eicosatetraenoate, AA, C20:4(n-6)), with a particular role in the inflammatory response. The cyclooxygenase activity oxygenates AA to the hydroperoxy endoperoxide prostaglandin G2 (PGG2), and the peroxidase activity reduces PGG2 to the hydroxy endoperoxide prostaglandin H2 (PGH2), the precursor of all 2-series prostaglandins and thromboxanes. This complex transformation is initiated by abstraction of hydrogen at carbon 13 (with S-stereochemistry), followed by insertion of molecular O2 to form the endoperoxide bridge between carbon 9 and 11 that defines prostaglandins. The insertion of a second molecule of O2 (bis-oxygenase activity) yields a hydroperoxy group in PGG2 that is then reduced to PGH2 by two electrons. Similarly catalyzes successive cyclooxygenation and peroxidation of dihomo-gamma-linoleate (DGLA, C20:3(n-6)) and eicosapentaenoate (EPA, C20:5(n-3)) to corresponding PGH1 and PGH3, the precursors of 1- and 3-series prostaglandins. In an alternative pathway of prostanoid biosynthesis, converts 2-arachidonoyl lysophopholipids to prostanoid lysophopholipids, which are then hydrolyzed by intracellular phospholipases to release free prostanoids. Metabolizes 2-arachidonoyl glycerol yielding the glyceryl ester of PGH2, a process that can contribute to pain response. Generates lipid mediators from n-3 and n-6 polyunsaturated fatty acids (PUFAs) via a lipoxygenase-type mechanism. Oxygenates PUFAs to hydroperoxy compounds and then reduces them to corresponding alcohols. Plays a role in the generation of resolution phase interaction products (resolvins) during both sterile and infectious inflammation. Metabolizes docosahexaenoate (DHA, C22:6(n-3)) to 17R-HDHA, a precursor of the D-series resolvins (RvDs). As a component of the biosynthetic pathway of E-series resolvins (RvEs), converts eicosapentaenoate (EPA, C20:5(n-3)) primarily to 18S-HEPE that is further metabolized by ALOX5 and LTA4H to generate 18S-RvE1 and 18S-RvE2. In vascular endothelial cells, converts docosapentaenoate (DPA, C22:5(n-3)) to 13R-HDPA, a precursor for 13-series resolvins (RvTs) shown to activate macrophage phagocytosis during bacterial infection. In activated leukocytes, contributes to oxygenation of hydroxyeicosatetraenoates (HETE) to diHETES (5,15-diHETE and 5,11-diHETE). Can also use linoleate (LA, (9Z,12Z)-octadecadienoate, C18:2(n-6)) as substrate and produce hydroxyoctadecadienoates (HODEs) in a regio- and stereospecific manner, being (9R)-HODE ((9R)-hydroxy-(10E,12Z)-octadecadienoate) and (13S)-HODE ((13S)-hydroxy-(9Z,11E)-octadecadienoate) its major products. During neuroinflammation, plays a role in neuronal secretion of specialized preresolving mediators (SPMs) 15R-lipoxin A4 that regulates phagocytic microglia. This is Prostaglandin G/H synthase 2 (PTGS2) from Bos taurus (Bovine).